Here is a 155-residue protein sequence, read N- to C-terminus: MSTEKINLDIHKILTLLPHRYPILLVDRVLELEPHKGIKALKNVSINEPYFQGHFPKRPVMPGVLILEALAQAAALLTFSEEQPKDPENTLYYFVGIDGARFKRPVEPGDQLILNVTFERYIRGIWKFKAVAEVDGKVAAEAELMCTVKTTDVAP.

The active site involves H54.

The protein belongs to the thioester dehydratase family. FabZ subfamily.

The protein localises to the cytoplasm. It carries out the reaction a (3R)-hydroxyacyl-[ACP] = a (2E)-enoyl-[ACP] + H2O. In terms of biological role, involved in unsaturated fatty acids biosynthesis. Catalyzes the dehydration of short chain beta-hydroxyacyl-ACPs and long chain saturated and unsaturated beta-hydroxyacyl-ACPs. In Burkholderia lata (strain ATCC 17760 / DSM 23089 / LMG 22485 / NCIMB 9086 / R18194 / 383), this protein is 3-hydroxyacyl-[acyl-carrier-protein] dehydratase FabZ.